Consider the following 290-residue polypeptide: Thioredoxin-like protein 1 (290 aa).

A Thioredoxin domain is found at 24 to 104 (VDCYADWCGP…PQALKEKVAL (81 aa)). A disulfide bridge connects residues cysteine 31 and cysteine 34. Residues 118-290 (SSSAPVKGFA…SKGKLQKVEA (173 aa)) enclose the PITH domain.

The protein localises to the cytoplasm. It localises to the nucleus. Its function is as follows. Has a role in cellular detoxification of alkyl hydroperoxide. The sequence is that of Thioredoxin-like protein 1 (txl1) from Schizosaccharomyces pombe (strain 972 / ATCC 24843) (Fission yeast).